The following is a 96-amino-acid chain: Probable quinol oxidase subunit 4 (96 aa).

The next 3 membrane-spanning stretches (helical) occupy residues 8–28, 36–56, and 68–88; these read TVGFIASIVLTLLAVFVTLYT, VTIIFGFAFIQAALQLLMFMH, and FKVIFAIIITLVTVIGTYWVM.

Belongs to the cytochrome c oxidase bacterial subunit 4 family.

It is found in the cell membrane. The catalysed reaction is 2 a quinol + O2 = 2 a quinone + 2 H2O. Functionally, catalyzes quinol oxidation with the concomitant reduction of oxygen to water. This chain is Probable quinol oxidase subunit 4 (qoxD), found in Staphylococcus epidermidis (strain ATCC 35984 / DSM 28319 / BCRC 17069 / CCUG 31568 / BM 3577 / RP62A).